Reading from the N-terminus, the 496-residue chain is UDP-N-acetylmuramate--L-alanine ligase (496 aa).

Residue 122 to 128 coordinates ATP; sequence GTHGKTT.

Belongs to the MurCDEF family.

Its subcellular location is the cytoplasm. It carries out the reaction UDP-N-acetyl-alpha-D-muramate + L-alanine + ATP = UDP-N-acetyl-alpha-D-muramoyl-L-alanine + ADP + phosphate + H(+). It participates in cell wall biogenesis; peptidoglycan biosynthesis. Functionally, cell wall formation. The protein is UDP-N-acetylmuramate--L-alanine ligase of Mycolicibacterium paratuberculosis (strain ATCC BAA-968 / K-10) (Mycobacterium paratuberculosis).